The primary structure comprises 394 residues: Phosphopentomutase (394 aa).

Aspartate 13, aspartate 286, histidine 291, aspartate 327, histidine 328, and histidine 339 together coordinate Mn(2+).

Belongs to the phosphopentomutase family. Mn(2+) is required as a cofactor.

It is found in the cytoplasm. The enzyme catalyses 2-deoxy-alpha-D-ribose 1-phosphate = 2-deoxy-D-ribose 5-phosphate. The catalysed reaction is alpha-D-ribose 1-phosphate = D-ribose 5-phosphate. Its pathway is carbohydrate degradation; 2-deoxy-D-ribose 1-phosphate degradation; D-glyceraldehyde 3-phosphate and acetaldehyde from 2-deoxy-alpha-D-ribose 1-phosphate: step 1/2. In terms of biological role, isomerase that catalyzes the conversion of deoxy-ribose 1-phosphate (dRib-1-P) and ribose 1-phosphate (Rib-1-P) to deoxy-ribose 5-phosphate (dRib-5-P) and ribose 5-phosphate (Rib-5-P), respectively. The polypeptide is Phosphopentomutase (Bacillus cereus (strain B4264)).